The sequence spans 48 residues: Delta-actitoxin-Bcg1b (48 aa).

Intrachain disulfides connect Cys-4-Cys-45, Cys-6-Cys-35, and Cys-28-Cys-46.

The protein belongs to the sea anemone sodium channel inhibitory toxin family. Type I subfamily.

Its subcellular location is the secreted. The protein localises to the nematocyst. Functionally, binds to the sodium channels Nav1.1/SCN1A (EC(50)=165 nM), Nav1.5/SCN5A (EC(50)=103 nM) and Nav1.6/SCN8A (EC(50)=133 nM), thereby delaying their inactivation. Also inhibits Nav1.2/SCN2A, Nav1.3/SCN3A, and Nav1.4/SCN4A, but to a lesser extent. Inhibits Nav1.5 differently from isoforms Nav1.1 and Nav1.6. In Nav1.5 the effect consists in a right-shift of inactivation; whereas in both Nav1.1 and Nav1.6 the effect consists in an incomplete inactivation. This is Delta-actitoxin-Bcg1b from Bunodosoma cangicum (Sea anemone).